The chain runs to 230 residues: MASLGVQLVGYILGLLGLLGTSIAMLLPNWRTSSYVGASIVTAVGFSKGLWMECATHSTGITQCDIYSTLLGLPADIQAAQAMMVTSSAMSSLACIISVVGMRCTVFCQDSRAKDRVAVVGGVFFILGGILGFIPVAWNLHGILRDFYSPLVPDSMKFEIGEALYLGIISALFSLVAGVILCFSCSPQGNRTNYYDGYQAQPLATRSSPRSAQQPKAKSEFNSYSLTGYV.

Topologically, residues 1–7 are cytoplasmic; sequence MASLGVQ. The chain crosses the membrane as a helical span at residues 8 to 28; it reads LVGYILGLLGLLGTSIAMLLP. Over 29 to 81 the chain is Extracellular; sequence NWRTSSYVGASIVTAVGFSKGLWMECATHSTGITQCDIYSTLLGLPADIQAAQ. The cysteines at positions 54 and 64 are disulfide-linked. The chain crosses the membrane as a helical span at residues 82 to 102; the sequence is AMMVTSSAMSSLACIISVVGM. Residues 103-116 are Cytoplasmic-facing; sequence RCTVFCQDSRAKDR. A helical membrane pass occupies residues 117–137; the sequence is VAVVGGVFFILGGILGFIPVA. Topologically, residues 138–162 are extracellular; that stretch reads WNLHGILRDFYSPLVPDSMKFEIGE. Residues 163-183 traverse the membrane as a helical segment; the sequence is ALYLGIISALFSLVAGVILCF. The Cytoplasmic portion of the chain corresponds to 184–230; that stretch reads SCSPQGNRTNYYDGYQAQPLATRSSPRSAQQPKAKSEFNSYSLTGYV. The tract at residues 205–230 is disordered; it reads TRSSPRSAQQPKAKSEFNSYSLTGYV. A Glycyl lysine isopeptide (Lys-Gly) (interchain with G-Cter in SUMO) cross-link involves residue lysine 218. Serine 219 and serine 223 each carry phosphoserine. The interval 229-230 is interactions with TJP1, TJP2 and TJP3; sequence YV.

The protein belongs to the claudin family. As to quaternary structure, can form homo- and heteropolymers with other claudins to mediate paracellular barrier and channel functions of tight junctions in response to physiological stimuli. Homopolymers interact with CLDN3, but not CLDN1, homopolymers. Directly interacts with TJP1/ZO-1, TJP2/ZO-2 and TJP3/ZO-3. Post-translationally, the disulfide bond is necessary for pore formation, but is not required for correct protein trafficking. In terms of tissue distribution, expressed in the kidney, liver and intestine, with higher levels in the ileum than in the jejunum. Low levels in the brain. Expressed in colonic epithelium (at protein level). Expressed in the perivenous regions, bile ducts, and gallbladder epithelium (at protein level).

It is found in the cell junction. It localises to the tight junction. The protein localises to the cell membrane. The enzyme catalyses Na(+)(in) = Na(+)(out). It carries out the reaction K(+)(in) = K(+)(out). It catalyses the reaction Rb(+)(in) = Rb(+)(out). The catalysed reaction is Li(+)(in) = Li(+)(out). The enzyme catalyses Cs(+)(in) = Cs(+)(out). It carries out the reaction Ca(2+)(in) = Ca(2+)(out). It catalyses the reaction methylamine(out) = methylamine(in). The catalysed reaction is choline(out) = choline(in). The enzyme catalyses H2O(in) = H2O(out). Its activity is regulated as follows. The channel permeability is down-regulated at acidic pH. In terms of biological role, forms paracellular channels: polymerizes in tight junction strands with cation- and water-selective channels through the strands, conveying epithelial permeability in a process known as paracellular tight junction permeability. In intestinal epithelium, allows for sodium and water fluxes from the peritoneal side to the lumen of the intestine to regulate nutrient absorption and clear enteric pathogens as part of mucosal immune response. In kidney, allows passive sodium and calcium reabsorption across proximal tubules from the lumen back to the bloodstream. In the hepatobiliary tract, allows paracellular water and cation fluxes in the hepatic perivenous areas and biliary epithelium to generate bile flow and maintain osmotic gradients. This is Claudin-2 from Mus musculus (Mouse).